The following is a 343-amino-acid chain: Dihydroorotase (343 aa).

Zn(2+) contacts are provided by histidine 14 and histidine 16. Substrate contacts are provided by residues 16–18 (HLR) and asparagine 42. 3 residues coordinate Zn(2+): lysine 99, histidine 136, and histidine 174. Lysine 99 bears the N6-carboxylysine mark. Histidine 136 contacts substrate. Residue leucine 219 coordinates substrate. Aspartate 247 lines the Zn(2+) pocket. The active site involves aspartate 247. Residues histidine 251 and alanine 263 each contribute to the substrate site.

It belongs to the metallo-dependent hydrolases superfamily. DHOase family. Class II DHOase subfamily. In terms of assembly, homodimer. Zn(2+) serves as cofactor.

It catalyses the reaction (S)-dihydroorotate + H2O = N-carbamoyl-L-aspartate + H(+). It functions in the pathway pyrimidine metabolism; UMP biosynthesis via de novo pathway; (S)-dihydroorotate from bicarbonate: step 3/3. Its function is as follows. Catalyzes the reversible cyclization of carbamoyl aspartate to dihydroorotate. This chain is Dihydroorotase, found in Psychromonas ingrahamii (strain DSM 17664 / CCUG 51855 / 37).